The sequence spans 382 residues: D-galactonate dehydratase (382 aa).

D183 serves as a coordination point for Mg(2+). H185 serves as the catalytic Proton donor. Mg(2+) is bound by residues E209 and E235. Catalysis depends on H285, which acts as the Proton acceptor. Positions 361 to 382 (NENPPDWRNPVWRHSDGSIAEW) are disordered.

Belongs to the mandelate racemase/muconate lactonizing enzyme family. GalD subfamily. Mg(2+) is required as a cofactor.

It carries out the reaction D-galactonate = 2-dehydro-3-deoxy-D-galactonate + H2O. It functions in the pathway carbohydrate acid metabolism; D-galactonate degradation; D-glyceraldehyde 3-phosphate and pyruvate from D-galactonate: step 1/3. Its function is as follows. Catalyzes the dehydration of D-galactonate to 2-keto-3-deoxy-D-galactonate. The chain is D-galactonate dehydratase from Xanthomonas axonopodis pv. citri (strain 306).